Reading from the N-terminus, the 697-residue chain is Elongation factor G 2 (697 aa).

The tr-type G domain occupies 6–281; it reads TNYRNFGIFA…AVVDFLPNPT (276 aa). GTP contacts are provided by residues 15 to 22, 79 to 83, and 133 to 136; these read AHVDAGKT, DTPGH, and NKLD.

The protein belongs to the TRAFAC class translation factor GTPase superfamily. Classic translation factor GTPase family. EF-G/EF-2 subfamily.

The protein resides in the cytoplasm. Its function is as follows. Catalyzes the GTP-dependent ribosomal translocation step during translation elongation. During this step, the ribosome changes from the pre-translocational (PRE) to the post-translocational (POST) state as the newly formed A-site-bound peptidyl-tRNA and P-site-bound deacylated tRNA move to the P and E sites, respectively. Catalyzes the coordinated movement of the two tRNA molecules, the mRNA and conformational changes in the ribosome. This Trichodesmium erythraeum (strain IMS101) protein is Elongation factor G 2.